Reading from the N-terminus, the 700-residue chain is Methionine--tRNA ligase (700 aa).

The 'HIGH' region signature appears at 14-24; it reads PYANGPVHLGH. Residues Cys146, Cys149, Cys159, and Cys162 each coordinate Zn(2+). Positions 344-348 match the 'KMSKS' region motif; that stretch reads KFSKS. Lys347 lines the ATP pocket. Residues 599 to 700 enclose the tRNA-binding domain; that stretch reads DFLKVDLRVA…GEEINGRQIQ (102 aa).

The protein belongs to the class-I aminoacyl-tRNA synthetase family. MetG type 1 subfamily. In terms of assembly, homodimer. Requires Zn(2+) as cofactor.

It is found in the cytoplasm. The enzyme catalyses tRNA(Met) + L-methionine + ATP = L-methionyl-tRNA(Met) + AMP + diphosphate. In terms of biological role, is required not only for elongation of protein synthesis but also for the initiation of all mRNA translation through initiator tRNA(fMet) aminoacylation. This is Methionine--tRNA ligase from Pelodictyon phaeoclathratiforme (strain DSM 5477 / BU-1).